Consider the following 112-residue polypeptide: MTEVKLDFDKQGGLVPVIVTDYKTGQVLMLAYMNEVSYQLTLETKQMHYWSRSRNELWHKGATSGHFQHVKSIKTDCDWDTLLIAVEQEGAACHTGAYSCFFTDIYDDNQDR.

Aspartate 76 contacts Mg(2+). A Zn(2+)-binding site is contributed by cysteine 77. Aspartate 78 and aspartate 80 together coordinate Mg(2+). Residues cysteine 93 and cysteine 100 each coordinate Zn(2+).

Belongs to the PRA-CH family. Homodimer. The cofactor is Mg(2+). Zn(2+) serves as cofactor.

It localises to the cytoplasm. It carries out the reaction 1-(5-phospho-beta-D-ribosyl)-5'-AMP + H2O = 1-(5-phospho-beta-D-ribosyl)-5-[(5-phospho-beta-D-ribosylamino)methylideneamino]imidazole-4-carboxamide. It participates in amino-acid biosynthesis; L-histidine biosynthesis; L-histidine from 5-phospho-alpha-D-ribose 1-diphosphate: step 3/9. Its function is as follows. Catalyzes the hydrolysis of the adenine ring of phosphoribosyl-AMP. The chain is Phosphoribosyl-AMP cyclohydrolase from Streptococcus thermophilus (strain ATCC BAA-491 / LMD-9).